Consider the following 574-residue polypeptide: NADH-ubiquinone oxidoreductase chain 5 (574 aa).

The next 16 helical transmembrane spans lie at 10–30, 50–70, 87–107, 111–131, 141–161, 181–203, 211–231, 240–260, 280–300, 301–321, 340–360, 381–401, 423–443, 458–478, 489–509, and 554–574; these read VASK…LYMV, MMMT…VVMI, FINR…MLIF, LIIL…LVIY, GMIT…AIAW, YQAL…SSWL, TPVS…FLLI, VWWF…MAGL, LGMM…FHMV, THAM…HSHM, TSCL…SGFY, LILF…MCVV, MLLL…ILPL, TLML…TTNM, IINY…QFMM, and TPMN…LVAI.

This sequence belongs to the complex I subunit 5 family.

Its subcellular location is the mitochondrion inner membrane. It catalyses the reaction a ubiquinone + NADH + 5 H(+)(in) = a ubiquinol + NAD(+) + 4 H(+)(out). Functionally, core subunit of the mitochondrial membrane respiratory chain NADH dehydrogenase (Complex I) that is believed to belong to the minimal assembly required for catalysis. Complex I functions in the transfer of electrons from NADH to the respiratory chain. The immediate electron acceptor for the enzyme is believed to be ubiquinone. The sequence is that of NADH-ubiquinone oxidoreductase chain 5 (ND5) from Lumbricus terrestris (Common earthworm).